Consider the following 181-residue polypeptide: PLAT domain-containing protein 1 (181 aa).

Positions 1–14 (MARRDVLLPFLLLL) are cleaved as a signal peptide. N-acetylalanine is present on A15. The 128-residue stretch at 29–156 (CVYTFYLRTG…SPYELTAVRN (128 aa)) folds into the PLAT domain.

Expressed in root tips, pericycle cells, lateral root primordia, stomata, leaf vasculature, hydathodes and floral organs.

The protein localises to the endoplasmic reticulum. It localises to the plastid. It is found in the chloroplast. The protein resides in the plastoglobule. Functionally, positive regulator of abiotic stress tolerance involved in the regulation of plant growth. May be a downstream target of the abscisic acid (ABA) signaling pathway. This chain is PLAT domain-containing protein 1, found in Arabidopsis thaliana (Mouse-ear cress).